Reading from the N-terminus, the 159-residue chain is Globin D, coelomic (159 aa).

At glycine 2 the chain carries N-acetylglycine. One can recognise a Globin domain in the interval 12-158 (DLTPAEKDLI…VQGVLITKHA (147 aa)). 2 residues coordinate heme b: histidine 74 and histidine 105.

Belongs to the globin family. Homodimer.

The sequence is that of Globin D, coelomic from Molpadia arenicola (Sea cucumber).